The primary structure comprises 256 residues: Tyrosine-protein kinase-interacting protein (256 aa).

Over residues 1–14 (MANEGEEIELTEFP) the composition is skewed to acidic residues. Residues 1–49 (MANEGEEIELTEFPETEKERKDEEKLSSCSEETTNTSSSSGSDHVPVPI) form a disordered region. Residues 1 to 228 (MANEGEEIEL…DLKRLENKIN (228 aa)) are Cytoplasmic-facing. Over residues 15 to 26 (ETEKERKDEEKL) the composition is skewed to basic and acidic residues. Low complexity predominate over residues 27-42 (SSCSEETTNTSSSSGS). Phosphotyrosine; by host LCK is present on tyrosine 114. Position 127 is a phosphotyrosine; by host (tyrosine 127). Residues 146–155 (EDLQSFLEKY) form a CSKH/LBD2 region. The disordered stretch occupies residues 162–183 (PKRDLSATWDPGMPTPPLPPRP). Residues 174–183 (MPTPPLPPRP) form an SH3B/LBD1 region. Residues 174-183 (MPTPPLPPRP) are compositionally biased toward pro residues. Residues 229–249 (VIICLVVVILAVLLLVTVLSI) traverse the membrane as a helical segment. The Extracellular portion of the chain corresponds to 250–256 (LHIGMKS).

Binds host LCK, human WDR48 and human NXF1/TAP. Forms a complex with activated LCK and STAT1 and STAT3. Phosphorylation on Tyr-114 acts as a docking site for the recruitment of STATs 1 and 3.

It is found in the host cell membrane. In terms of biological role, plays a critical role in virus induced T-cell transformation. Binds to T-cell-specific tyrosine kinase LCK SH2 and SH3 domains, thereby activating its kinase activity. Once phosphorylated by host LCK, forms a complex with at least STAT 1 and 3, resulting on the phosphorylation of STAT3 and presumably STAT1, and their migration into the nucleus to induce transcription of target genes. Stimulates host ILF3/NF-AT-90 activity. Association with host NXF1/TAP transduces the signal up-regulating surface expression of adhesion molecules as well as activating NF-kappa-B activity. Acts synergistically with StpC to stimulate NF-kappa-B activity and interleukin-2 gene expression. Activation of NF-kappa-B protects lymphocytes from apoptosis, thereby facilitating viral induced cell transformation. May cause down-regulation of host LCK and cell apoptosis when stably overexpressed ex vivo. Interaction with WDR48 induce degradation of T-cell receptor in a lysosome-dependent fashion, when both proteins are overexpressed. The biological effect of this interaction remains controversial since no T-cell receptor degradation is observed in infected cells. The sequence is that of Tyrosine-protein kinase-interacting protein from Saimiri sciureus (Common squirrel monkey).